Consider the following 315-residue polypeptide: Porphobilinogen deaminase (315 aa).

C245 carries the S-(dipyrrolylmethanemethyl)cysteine modification.

Belongs to the HMBS family. In terms of assembly, monomer. The cofactor is dipyrromethane.

It catalyses the reaction 4 porphobilinogen + H2O = hydroxymethylbilane + 4 NH4(+). The protein operates within porphyrin-containing compound metabolism; protoporphyrin-IX biosynthesis; coproporphyrinogen-III from 5-aminolevulinate: step 2/4. It functions in the pathway porphyrin-containing compound metabolism; chlorophyll biosynthesis. In terms of biological role, tetrapolymerization of the monopyrrole PBG into the hydroxymethylbilane pre-uroporphyrinogen in several discrete steps. In Prochlorococcus marinus (strain NATL2A), this protein is Porphobilinogen deaminase.